A 282-amino-acid chain; its full sequence is Parvulin-like PPIase (282 aa).

An N-terminal signal peptide occupies residues 1 to 20 (MKKLSVIFLSVSMLSSIAFG). The PpiC domain occupies 138-231 (KEQIKVAHIL…FGWHIIKVLE (94 aa)).

Belongs to the PpiC/parvulin rotamase family.

Its subcellular location is the cell outer membrane. It carries out the reaction [protein]-peptidylproline (omega=180) = [protein]-peptidylproline (omega=0). The protein is Parvulin-like PPIase (plp) of Rickettsia prowazekii (strain Madrid E).